We begin with the raw amino-acid sequence, 434 residues long: KH domain-containing protein 3 (434 aa).

The segment at 1-39 (MATLKTFRTLVQLKHKLGKAYEIVGEPRLPKWFHVEYLE) is involved in RNA binding. One can recognise a KH; atypical domain in the interval 40-118 (DPKKMYVEPT…CRMKLMEKEA (79 aa)). Residues Thr267 and Thr279 each carry the phosphothreonine modification. Residues 334–434 (VREAATQQTP…RAVWEPFVML (101 aa)) are required for interaction with NUMA1 and regulation of apoptosis in response to DNA damage.

It belongs to the KHDC1 family. In terms of assembly, component of the subcortical maternal complex (SCMC), at least composed of NLRP5, KHDC3, OOEP, and TLE6. Within the complex, interacts with NLRP5, KHDC3 and TLE6. The SCMC may facilitate translocation of its components between the nuclear and cytoplasmic compartments. Forms a scaffold complex with OOEP/FLOPED, and interacts with BLM and TRIM25 at DNA replication forks. Interacts with PARP1; the interaction is increased following the formation of DNA double-strand breaks. Interacts (via C-terminus) with NUMA1.

It localises to the cytoplasm. The protein localises to the cell cortex. Its subcellular location is the nucleus. It is found in the mitochondrion. The protein resides in the cytoskeleton. It localises to the microtubule organizing center. The protein localises to the centrosome. Its subcellular location is the chromosome. Component of the subcortical maternal complex (SCMC), a multiprotein complex that plays a key role in early embryonic development. The SCMC complex is a structural constituent of cytoplasmic lattices, which consist in fibrous structures found in the cytoplasm of oocytes and preimplantation embryos. They are required to store maternal proteins critical for embryonic development, such as proteins that control epigenetic reprogramming of the preimplantation embryo, and prevent their degradation or activation. KHDC3 ensures proper spindle assembly by regulating the localization of AURKA via RHOA signaling and of PLK1 via a RHOA-independent process. Required for the localization of MAD2L1 to kinetochores to enable spindle assembly checkpoint function. As part of the OOEP-KHDC3 scaffold, recruits BLM and TRIM25 to DNA replication forks, thereby promoting the ubiquitination of BLM by TRIM25, enhancing BLM retainment at replication forks and therefore promoting stalled replication fork restart. Regulates homologous recombination-mediated DNA repair via recruitment of RAD51 to sites of DNA double-strand breaks, and sustainment of PARP1 activity, which in turn modulates downstream ATM or ATR activation. Activation of ATM or ATR in response to DNA double-strand breaks may be cell-type specific. Its role in DNA double-strand break repair is independent of its role in restarting stalled replication forks. Promotes neural stem cell neurogenesis and neuronal differentiation in the hippocampus. May regulate normal development of learning, memory and anxiety. Capable of binding RNA. This chain is KH domain-containing protein 3, found in Rattus norvegicus (Rat).